Consider the following 1469-residue polypeptide: uncharacterized protein (1469 aa).

The segment covering 146 to 180 (GDHITPKEEEEKEKEKEKEKEKEKEKEKEKEKDSE) has biased composition (basic and acidic residues). Disordered stretches follow at residues 146 to 186 (GDHI…LQEQ), 231 to 255 (IQNNQNNQNNNDSPINKEIEDDNNN), 306 to 344 (TTTTTTTTTSSSNNCTNSISNTDKSTTTNCPPVENGGDS), 430 to 455 (LNFNNNNNNNNNNNNNNNNNSQPYHY), 520 to 560 (PVKN…NNNS), 654 to 706 (TTTT…PLVR), 719 to 755 (RTQTQLQTKIQPKSPQPQPTAAPEPQKPPTPSIVKNQ), 881 to 958 (YNNI…NIIN), and 1329 to 1369 (NCSS…NSSN). Composition is skewed to low complexity over residues 232-241 (QNNQNNQNNN), 306-327 (TTTTTTTTTSSSNNCTNSISNT), 430-449 (LNFNNNNNNNNNNNNNNNNN), 523-559 (NNNNNNNNNNNNNNNNNNNNNNNNNNNNNNNNNINNN), and 654-693 (TTTTTTNTNSTNTNSTINATSPPHTPKLSSSPLLTTTTTP). Positions 719-731 (RTQTQLQTKIQPK) are enriched in polar residues. Residues 732–749 (SPQPQPTAAPEPQKPPTP) show a composition bias toward pro residues. Composition is skewed to low complexity over residues 1329–1347 (NCSSSSSSSESNGIDSGSE) and 1354–1369 (RSNTTNNSNNINNSSN).

This is an uncharacterized protein from Dictyostelium discoideum (Social amoeba).